A 133-amino-acid chain; its full sequence is Basic phospholipase A2 beta-bungarotoxin A-AL2 chain (133 aa).

The first 5 residues, 1–5 (FLLGA), serve as a signal peptide directing secretion. Residues 6-13 (ANIPPHPL) constitute a propeptide that is removed on maturation. Intrachain disulfides connect C40–C132, C42–C58, C57–C113, C64–C106, C74–C99, and C92–C104. 3 residues coordinate Ca(2+): Y41, G43, and G45. H61 is an active-site residue. D62 serves as a coordination point for Ca(2+). Residue D107 is part of the active site.

Belongs to the phospholipase A2 family. Group I subfamily. D49 sub-subfamily. As to quaternary structure, heterodimer; disulfide-linked. The A chains have phospholipase A2 activity and the B chains show homology with the basic protease inhibitors. The cofactor is Ca(2+). As to expression, expressed by the venom gland.

The protein localises to the secreted. It catalyses the reaction a 1,2-diacyl-sn-glycero-3-phosphocholine + H2O = a 1-acyl-sn-glycero-3-phosphocholine + a fatty acid + H(+). In terms of biological role, snake venom phospholipase A2 (PLA2) that inhibits neuromuscular transmission by blocking acetylcholine release from the nerve termini. PLA2 catalyzes the calcium-dependent hydrolysis of the 2-acyl groups in 3-sn-phosphoglycerides. The chain is Basic phospholipase A2 beta-bungarotoxin A-AL2 chain from Bungarus multicinctus (Many-banded krait).